Here is a 290-residue protein sequence, read N- to C-terminus: AA9 family lytic polysaccharide monooxygenase A (290 aa).

The N-terminal stretch at 1 to 17 (MKLSLLASVALVPFVSA) is a signal peptide. Residues His-18 and His-101 each coordinate Cu(2+). Cys-67 and Cys-189 form a disulfide bridge. Position 176 (His-176) interacts with O2. Tyr-187 lines the Cu(2+) pocket. N-linked (GlcNAc...) asparagine glycosylation is found at Asn-220 and Asn-254. Positions 240 to 290 (GGSGSGSSSYSKVANVTSSDESSQSGASSSQGTVSTCPNKYNRRHARQFKP) are disordered. Positions 245–275 (GSSSYSKVANVTSSDESSQSGASSSQGTVST) are enriched in low complexity. The segment covering 280-290 (YNRRHARQFKP) has biased composition (basic residues).

The protein belongs to the polysaccharide monooxygenase AA9 family. It depends on Cu(2+) as a cofactor.

It localises to the secreted. It catalyses the reaction [(1-&gt;4)-beta-D-glucosyl]n+m + reduced acceptor + O2 = 4-dehydro-beta-D-glucosyl-[(1-&gt;4)-beta-D-glucosyl]n-1 + [(1-&gt;4)-beta-D-glucosyl]m + acceptor + H2O.. Lytic polysaccharide monooxygenase (LPMO) that depolymerizes crystalline and amorphous polysaccharides via the oxidation of scissile alpha- or beta-(1-4)-glycosidic bonds, yielding exclusively C1 oxidation products. Catalysis by LPMOs requires the reduction of the active-site copper from Cu(II) to Cu(I) by a reducing agent and H(2)O(2) or O(2) as a cosubstrate. This chain is AA9 family lytic polysaccharide monooxygenase A, found in Aspergillus fumigatus (strain ATCC MYA-4609 / CBS 101355 / FGSC A1100 / Af293) (Neosartorya fumigata).